Reading from the N-terminus, the 550-residue chain is Hydroxylamine reductase (550 aa).

The [2Fe-2S] cluster site is built by C3, C6, C18, and C25. Positions 249, 273, 317, 405, 433, 458, 492, and 494 each coordinate hybrid [4Fe-2O-2S] cluster. C405 is modified (cysteine persulfide).

Belongs to the HCP family. [2Fe-2S] cluster serves as cofactor. Hybrid [4Fe-2O-2S] cluster is required as a cofactor.

It localises to the cytoplasm. The catalysed reaction is A + NH4(+) + H2O = hydroxylamine + AH2 + H(+). Catalyzes the reduction of hydroxylamine to form NH(3) and H(2)O. This is Hydroxylamine reductase from Escherichia coli O6:H1 (strain CFT073 / ATCC 700928 / UPEC).